The chain runs to 38 residues: Large ribosomal subunit protein bL36 (38 aa).

It belongs to the bacterial ribosomal protein bL36 family.

This Saccharophagus degradans (strain 2-40 / ATCC 43961 / DSM 17024) protein is Large ribosomal subunit protein bL36.